Reading from the N-terminus, the 49-residue chain is uncharacterized protein (49 aa).

The N-terminal stretch at 1 to 22 is a signal peptide; the sequence is MKLNAFHLVVVVLIVSIFSVSS.

The protein resides in the secreted. This is an uncharacterized protein from Dictyostelium discoideum (Social amoeba).